Reading from the N-terminus, the 644-residue chain is Tubulin--tyrosine ligase-like protein 12 (644 aa).

The span at 1–13 shows a compositional bias: basic and acidic residues; that stretch reads MEAERGPERRPAE. Residues 1-25 are disordered; the sequence is MEAERGPERRPAERSSPGQTPEEGA. Positions 300 to 644 constitute a TTL domain; the sequence is PHGHIFKVYT…PGGCHVTCLV (345 aa). Residues 450-453, Lys468, and Asp470 each bind ATP; that span reads SKYI.

Belongs to the tubulin--tyrosine ligase family. As to quaternary structure, interacts with MAVS; the interaction prevents MAVS binding to TBK1 and IKBKE. Interacts (via N-terminus) with TBK1 (via protein kinase domain). Interacts (via TTL domain) with IKBKE (via protein kinase domain). Interacts with tubulin alpha. Interacts with histone H3 and histone H4 (when trimethylated at 'Lys-20' (H4K20me3)). Interacts with CBX3. In terms of tissue distribution, expressed in the basal layer of prostate and endothelial cells. Increased expression in prostatic intraepithelial neoplasia and metastatic lesions.

It is found in the cytoplasm. It localises to the midbody. Its subcellular location is the cytoskeleton. The protein resides in the microtubule organizing center. The protein localises to the centrosome. It is found in the spindle. It localises to the nucleus. Its function is as follows. Negatively regulates post-translational modifications of tubulin, including detyrosination of the C-terminus and polyglutamylation of glutamate residues. Also, indirectly promotes histone H4 trimethylation at 'Lys-20' (H4K20me3). Probably by controlling tubulin and/or histone H4 post-translational modifications, plays a role in mitosis and in maintaining chromosome number stability. During RNA virus-mediated infection, acts as a negative regulator of the RIG-I pathway by preventing MAVS binding to TBK1 and IKBKE. The polypeptide is Tubulin--tyrosine ligase-like protein 12 (TTLL12) (Homo sapiens (Human)).